The following is a 218-amino-acid chain: Large ribosomal subunit protein bL25 (218 aa).

The disordered stretch occupies residues 178-218 (VTPPTVTEDPDATEEDNTTAESVEATGERNDDNLDRPGRVE). Acidic residues predominate over residues 185–195 (EDPDATEEDNT). Residues 203-218 (TGERNDDNLDRPGRVE) are compositionally biased toward basic and acidic residues.

The protein belongs to the bacterial ribosomal protein bL25 family. CTC subfamily. As to quaternary structure, part of the 50S ribosomal subunit; part of the 5S rRNA/L5/L18/L25 subcomplex. Contacts the 5S rRNA. Binds to the 5S rRNA independently of L5 and L18.

Functionally, this is one of the proteins that binds to the 5S RNA in the ribosome where it forms part of the central protuberance. In Shouchella clausii (strain KSM-K16) (Alkalihalobacillus clausii), this protein is Large ribosomal subunit protein bL25.